We begin with the raw amino-acid sequence, 289 residues long: Transmembrane protein 163 (289 aa).

The disordered stretch occupies residues 1-65 (MEPAAGIQRR…ESGQFSDGLE (65 aa)). Residues 1–88 (MEPAAGIQRR…HEAQNYRKKA (88 aa)) are Cytoplasmic-facing. Residue S11 is modified to Phosphoserine. The span at 16-36 (TVPPPPRGHAPPAAAPGPAPL) shows a compositional bias: pro residues. Residues 42–72 (EPPQLEEERQVRISESGQFSDGLEDRGLLES) form a required for interaction with MCOLN1 region. S55, S57, and S61 each carry phosphoserine. The chain crosses the membrane as a helical span at residues 89–109 (LWVSWFSIIVTLALAVAAFTV). Residues 110–116 (SVMRYSA) lie on the Extracellular side of the membrane. The helical transmembrane segment at 117 to 137 (SAFGFAFDAILDVLSSAIVLW) threads the bilayer. Topologically, residues 138 to 150 (RYSNAAAVHSAHR) are cytoplasmic. The chain crosses the membrane as a helical span at residues 151–171 (EYIACVILGVIFLLSSICIVV). Topologically, residues 172-187 (KAIHDLSTRLLPEVDD) are extracellular. Residues 188–208 (FLFSVSILSGILCSILAVLKF) form a helical membrane-spanning segment. At 209–217 (MLGKVLTSR) the chain is on the cytoplasmic side. Residues 218–238 (ALITDGFNSLVGGVMGFSILL) form a helical membrane-spanning segment. Residues 239 to 255 (SAEVFKHDSAVWYLDGS) are Extracellular-facing. A helical transmembrane segment spans residues 256–276 (IGVLIGLTIFAYGVKLLIDMV). At 277–289 (PRVRQTRHYEMFE) the chain is on the cytoplasmic side.

The protein belongs to the TMEM163 family. In terms of assembly, homodimer. Interacts with MCOLN1/TRPML1. Interacts with SLC30A1, SLC30A2, SLC30A3 and SLC30A4. Widely expressed. High expression is detected in brain, lung and testis.

It is found in the cytoplasmic vesicle. It localises to the secretory vesicle. The protein resides in the synaptic vesicle membrane. Its subcellular location is the early endosome membrane. The protein localises to the late endosome membrane. It is found in the lysosome membrane. It localises to the cell membrane. The enzyme catalyses Zn(2+)(in) = Zn(2+)(out). Its function is as follows. Zinc ion transporter that mediates zinc efflux and plays a crucial role in intracellular zinc homeostasis. Binds the divalent cations Zn(2+), Ni(2+), and to a minor extent Cu(2+). Is a functional modulator of P2X purinoceptors, including P2RX1, P2RX3, P2RX4 and P2RX7. Plays a role in central nervous system development and is required for myelination, and survival and proliferation of oligodendrocytes. The chain is Transmembrane protein 163 (TMEM163) from Homo sapiens (Human).